Here is a 395-residue protein sequence, read N- to C-terminus: Putative 8-amino-7-oxononanoate synthase (395 aa).

Arg23 provides a ligand contact to substrate. Gly110 to Tyr111 is a binding site for pyridoxal 5'-phosphate. His135 lines the substrate pocket. Pyridoxal 5'-phosphate-binding positions include Ser182, Asp207 to His210, and Thr239 to Lys242. Residue Lys242 is modified to N6-(pyridoxal phosphate)lysine. Position 356 (Thr356) interacts with substrate.

Belongs to the class-II pyridoxal-phosphate-dependent aminotransferase family. BioF subfamily. As to quaternary structure, homodimer. It depends on pyridoxal 5'-phosphate as a cofactor.

It catalyses the reaction 6-carboxyhexanoyl-[ACP] + L-alanine + H(+) = (8S)-8-amino-7-oxononanoate + holo-[ACP] + CO2. The protein operates within cofactor biosynthesis; biotin biosynthesis. In terms of biological role, catalyzes the decarboxylative condensation of pimeloyl-[acyl-carrier protein] and L-alanine to produce 8-amino-7-oxononanoate (AON), [acyl-carrier protein], and carbon dioxide. The polypeptide is Putative 8-amino-7-oxononanoate synthase (bioF) (Bacillus cereus (strain ATCC 10987 / NRS 248)).